The chain runs to 377 residues: Delta(12) fatty acid desaturase DES8.11 (377 aa).

2 consecutive transmembrane segments (helical) span residues 55-75 (LIVA…IPTP) and 79-99 (LAWP…WVIG). Residues 100 to 104 (HECGH) carry the Histidine box-1 motif. A helical membrane pass occupies residues 112 to 132 (LIDDIVGFVLHSALLTPYFSW). A Histidine box-2 motif is present at residues 136 to 140 (HRNHH). Helical transmembrane passes span 174–194 (VFTL…TNIS), 220–240 (VLLS…LVAA), and 244–264 (AWVI…FVLI). The Histidine box-3 motif lies at 310 to 314 (HVLHH).

It belongs to the fatty acid desaturase type 1 family.

The protein localises to the membrane. It participates in lipid metabolism; polyunsaturated fatty acid biosynthesis. In terms of biological role, converts linoleic acid into a conjugated octadecatrienoic acid, probably calendic acid. This chain is Delta(12) fatty acid desaturase DES8.11, found in Calendula officinalis (Pot marigold).